The following is a 350-amino-acid chain: Glycerol-1-phosphate dehydrogenase [NAD(P)+] (350 aa).

Residues glycine 96 to aspartate 100 and threonine 118 to serine 121 each bind NAD(+). Residue aspartate 123 coordinates substrate. Position 127 (serine 127) interacts with NAD(+). Aspartate 170 contacts substrate. Zn(2+)-binding residues include aspartate 170 and histidine 250. Histidine 254 serves as a coordination point for substrate. Histidine 266 serves as a coordination point for Zn(2+).

Belongs to the glycerol-1-phosphate dehydrogenase family. In terms of assembly, homodimer. Zn(2+) serves as cofactor.

The protein resides in the cytoplasm. The catalysed reaction is sn-glycerol 1-phosphate + NAD(+) = dihydroxyacetone phosphate + NADH + H(+). The enzyme catalyses sn-glycerol 1-phosphate + NADP(+) = dihydroxyacetone phosphate + NADPH + H(+). Its pathway is membrane lipid metabolism; glycerophospholipid metabolism. Its function is as follows. Catalyzes the NAD(P)H-dependent reduction of dihydroxyacetonephosphate (DHAP or glycerone phosphate) to glycerol 1-phosphate (G1P). The G1P thus generated is used as the glycerophosphate backbone of phospholipids in the cellular membranes of Archaea. This is Glycerol-1-phosphate dehydrogenase [NAD(P)+] from Sulfurisphaera tokodaii (strain DSM 16993 / JCM 10545 / NBRC 100140 / 7) (Sulfolobus tokodaii).